Consider the following 156-residue polypeptide: Low molecular weight phosphotyrosine protein phosphatase (156 aa).

The Nucleophile role is filled by cysteine 11. The active site involves arginine 17. Aspartate 128 acts as the Proton donor in catalysis.

Belongs to the low molecular weight phosphotyrosine protein phosphatase family.

The protein resides in the cytoplasm. It catalyses the reaction O-phospho-L-tyrosyl-[protein] + H2O = L-tyrosyl-[protein] + phosphate. It carries out the reaction a phosphate monoester + H2O = an alcohol + phosphate. In terms of biological role, may contribute to dephosphorylation of 'Tyr-15' of cdc2. This is Low molecular weight phosphotyrosine protein phosphatase (stp1) from Schizosaccharomyces pombe (strain 972 / ATCC 24843) (Fission yeast).